We begin with the raw amino-acid sequence, 121 residues long: Ribonuclease P protein component (121 aa).

This sequence belongs to the RnpA family. Consists of a catalytic RNA component (M1 or rnpB) and a protein subunit.

It catalyses the reaction Endonucleolytic cleavage of RNA, removing 5'-extranucleotides from tRNA precursor.. Functionally, RNaseP catalyzes the removal of the 5'-leader sequence from pre-tRNA to produce the mature 5'-terminus. It can also cleave other RNA substrates such as 4.5S RNA. The protein component plays an auxiliary but essential role in vivo by binding to the 5'-leader sequence and broadening the substrate specificity of the ribozyme. This chain is Ribonuclease P protein component, found in Alcanivorax borkumensis (strain ATCC 700651 / DSM 11573 / NCIMB 13689 / SK2).